Consider the following 125-residue polypeptide: Small ribosomal subunit protein uS12 (125 aa).

A disordered region spans residues 1–23; it reads MATVNQLVRKGRTKRTAKSSVPA. The residue at position 89 (Asp-89) is a 3-methylthioaspartic acid. Residues 102–125 are disordered; it reads ADTAGVDKRRQGRSKYGAKRPKKK. Basic residues predominate over residues 111–125; sequence RQGRSKYGAKRPKKK.

Belongs to the universal ribosomal protein uS12 family. In terms of assembly, part of the 30S ribosomal subunit. Contacts proteins S8 and S17. May interact with IF1 in the 30S initiation complex.

Its function is as follows. With S4 and S5 plays an important role in translational accuracy. Interacts with and stabilizes bases of the 16S rRNA that are involved in tRNA selection in the A site and with the mRNA backbone. Located at the interface of the 30S and 50S subunits, it traverses the body of the 30S subunit contacting proteins on the other side and probably holding the rRNA structure together. The combined cluster of proteins S8, S12 and S17 appears to hold together the shoulder and platform of the 30S subunit. This is Small ribosomal subunit protein uS12 from Halorhodospira halophila (strain DSM 244 / SL1) (Ectothiorhodospira halophila (strain DSM 244 / SL1)).